Reading from the N-terminus, the 420-residue chain is Tyrosine--tRNA ligase 2 (420 aa).

Tyr-34 contributes to the L-tyrosine binding site. Residues 39 to 48 (PTGDSMHIGH) carry the 'HIGH' region motif. L-tyrosine is bound by residues Tyr-168 and Gln-172. Positions 230–234 (KFGKS) match the 'KMSKS' region motif. Residue Lys-233 coordinates ATP. Positions 352-418 (KNIVEWLVDL…GKKNYSLVKL (67 aa)) constitute an S4 RNA-binding domain.

Belongs to the class-I aminoacyl-tRNA synthetase family. TyrS type 1 subfamily. In terms of assembly, homodimer.

Its subcellular location is the cytoplasm. It carries out the reaction tRNA(Tyr) + L-tyrosine + ATP = L-tyrosyl-tRNA(Tyr) + AMP + diphosphate + H(+). Catalyzes the attachment of tyrosine to tRNA(Tyr) in a two-step reaction: tyrosine is first activated by ATP to form Tyr-AMP and then transferred to the acceptor end of tRNA(Tyr). The sequence is that of Tyrosine--tRNA ligase 2 from Bacillus cereus (strain ATCC 14579 / DSM 31 / CCUG 7414 / JCM 2152 / NBRC 15305 / NCIMB 9373 / NCTC 2599 / NRRL B-3711).